The primary structure comprises 217 residues: MNQTLLSSFGTAFERVEHALDALREGRGVMVLDDEDRENEGDMIFAAETMTVEQMALTIRHGSGIVCLCLTEDRRKQLDLPMMVENNTSAYGTGFTVTIEAAEGVTTGVSAADRVTTVRAAIADGAKPSDLNRPGHVFPLRAQPGGVLTRGGHTEATIDLVTLAGFKPAGVLCELTNDDGTMARAPECIKFAQQHNMAIVTIEDLVAYRREHERKAS.

Residues 37-38 (RE), Asp-42, 150-154 (RGGHT), and Glu-174 each bind D-ribulose 5-phosphate. Glu-38 contacts Mg(2+). A Mg(2+)-binding site is contributed by His-153.

Belongs to the DHBP synthase family. As to quaternary structure, homodimer. Mg(2+) is required as a cofactor. Mn(2+) serves as cofactor.

It carries out the reaction D-ribulose 5-phosphate = (2S)-2-hydroxy-3-oxobutyl phosphate + formate + H(+). The protein operates within cofactor biosynthesis; riboflavin biosynthesis; 2-hydroxy-3-oxobutyl phosphate from D-ribulose 5-phosphate: step 1/1. In terms of biological role, catalyzes the conversion of D-ribulose 5-phosphate to formate and 3,4-dihydroxy-2-butanone 4-phosphate. This is 3,4-dihydroxy-2-butanone 4-phosphate synthase from Klebsiella pneumoniae (strain 342).